A 382-amino-acid chain; its full sequence is UDP-N-acetylglucosamine--N-acetylmuramyl-(pentapeptide) pyrophosphoryl-undecaprenol N-acetylglucosamine transferase (382 aa).

UDP-N-acetyl-alpha-D-glucosamine is bound by residues 22-24 (TGG), Asn134, Arg186, Ser212, 285-290 (ALTVAE), and Gln311.

The protein belongs to the glycosyltransferase 28 family. MurG subfamily.

The protein localises to the cell inner membrane. The catalysed reaction is di-trans,octa-cis-undecaprenyl diphospho-N-acetyl-alpha-D-muramoyl-L-alanyl-D-glutamyl-meso-2,6-diaminopimeloyl-D-alanyl-D-alanine + UDP-N-acetyl-alpha-D-glucosamine = di-trans,octa-cis-undecaprenyl diphospho-[N-acetyl-alpha-D-glucosaminyl-(1-&gt;4)]-N-acetyl-alpha-D-muramoyl-L-alanyl-D-glutamyl-meso-2,6-diaminopimeloyl-D-alanyl-D-alanine + UDP + H(+). The protein operates within cell wall biogenesis; peptidoglycan biosynthesis. Its function is as follows. Cell wall formation. Catalyzes the transfer of a GlcNAc subunit on undecaprenyl-pyrophosphoryl-MurNAc-pentapeptide (lipid intermediate I) to form undecaprenyl-pyrophosphoryl-MurNAc-(pentapeptide)GlcNAc (lipid intermediate II). The protein is UDP-N-acetylglucosamine--N-acetylmuramyl-(pentapeptide) pyrophosphoryl-undecaprenol N-acetylglucosamine transferase of Pseudoalteromonas atlantica (strain T6c / ATCC BAA-1087).